Reading from the N-terminus, the 169-residue chain is MKYSTLAWLVIASYTVFAQDGTSVTGYTTTIVIPGSPPAGAGTAHGDTENTGTVHTTEHLTGTEETHTTGATPETTTIVAPTTTHENTTTHETSVENTATVHHNTTTLHHNTTTIHPNATGTETHTETGTGTLTGTGTEGPALTTTTVAEAFSLAAGASLGYLVALLFL.

The first 18 residues, 1 to 18 (MKYSTLAWLVIASYTVFA), serve as a signal peptide directing secretion. 4 N-linked (GlcNAc...) asparagine glycosylation sites follow: asparagine 87, asparagine 104, asparagine 111, and asparagine 118. Residue glycine 140 is the site of GPI-anchor amidated glycine attachment. Residues 141 to 169 (PALTTTTVAEAFSLAAGASLGYLVALLFL) constitute a propeptide, removed in mature form.

It is found in the cell membrane. Its function is as follows. Putative adhesin which may be involved in cell adhesion and virulence. In Candida albicans (strain SC5314 / ATCC MYA-2876) (Yeast), this protein is Probable GPI-anchored adhesin-like protein PGA22 (PGA22).